We begin with the raw amino-acid sequence, 1394 residues long: ABC transporter patM (1394 aa).

Residues 1-41 (MVDNYHSSLDVAKTPIQSDADAQKSEAETEGPSSKSSQIAA) form a disordered region. One can recognise an ABC transporter 1 domain in the interval 98-341 (SPLQNRQRKQ…FEDLGFECLS (244 aa)). The next 6 membrane-spanning stretches (helical) occupy residues 437-457 (SLWAVELATIVVQSLVLGTLF), 467-487 (LFIFASALFYSVLVPALQSMA), 511-531 (IAYALGLVTTDVVWKVAAICY), 546-566 (GNFFTWFLIIYLEHLALSMFF), 579-599 (AVLPVGIFFNMYVLYTGLYVP), and 688-708 (VGINAALFVFFALCSGIGMEM). The tract at residues 727–755 (VTHRRDKIDSETGQDQGNESSEMSAGQSN) is disordered. Over residues 737–755 (ETGQDQGNESSEMSAGQSN) the composition is skewed to polar residues. An ABC transporter 2 domain is found at 767–1013 (DKSHNLAWTN…EAIQYFQPRS (247 aa)). ATP is bound at residue 808 to 815 (GVSGAGKT). 6 helical membrane-spanning segments follow: residues 1131–1151 (GAYNRVFSAFMSLIVGPPLGL), 1177–1197 (LAFVLSAFIVELPFTFLSSLV), 1219–1239 (FLMYELFGVFATSLAQLCASL), 1245–1265 (AAFAANGFFFMFCNTFAGTLS), 1280–1300 (ISPLFYLGEGVTVDVLQDLPI), and 1368–1388 (IGVFICFIAFNFTMVLVMTYL).

This sequence belongs to the ABC transporter superfamily. ABCG family. PDR (TC 3.A.1.205) subfamily.

Its subcellular location is the vacuole membrane. It localises to the cell membrane. Its pathway is mycotoxin biosynthesis; patulin biosynthesis. Its function is as follows. ABC transporter; part of the gene cluster that mediates the biosynthesis of patulin, an acetate-derived tetraketide mycotoxin produced by several fungal species that shows antimicrobial properties against several bacteria. May be involved in the secretion of E-ascladiol to be converted to patulin by the secreted patulin synthase patE. The chain is ABC transporter patM from Penicillium expansum (Blue mold rot fungus).